A 262-amino-acid polypeptide reads, in one-letter code: Flap endonuclease Xni (262 aa).

A Mg(2+)-binding site is contributed by Asp105. Positions 162-259 constitute a 5'-3' exonuclease domain; that stretch reads ERSQFLDLMA…VIDSQPEKTI (98 aa). Residues Leu172, Ala173, Pro181, Ile183, and Ile186 each coordinate K(+). The interval 185–190 is interaction with DNA; that stretch reads GIGPKS.

It belongs to the Xni family. Mg(2+) is required as a cofactor. It depends on K(+) as a cofactor.

Has flap endonuclease activity. During DNA replication, flap endonucleases cleave the 5'-overhanging flap structure that is generated by displacement synthesis when DNA polymerase encounters the 5'-end of a downstream Okazaki fragment. The sequence is that of Flap endonuclease Xni from Shewanella baltica (strain OS185).